Consider the following 492-residue polypeptide: Cytochrome P450 26A1 (492 aa).

Cysteine 437 is a heme binding site.

This sequence belongs to the cytochrome P450 family. Heme is required as a cofactor.

Its subcellular location is the endoplasmic reticulum membrane. The protein resides in the microsome membrane. The enzyme catalyses all-trans-retinoate + reduced [NADPH--hemoprotein reductase] + O2 = all-trans-(4S)-hydroxyretinoate + oxidized [NADPH--hemoprotein reductase] + H2O + H(+). It catalyses the reaction all-trans-(4S)-hydroxyretinoate + reduced [NADPH--hemoprotein reductase] + O2 = all-trans-(4S,16)-dihydroxyretinoate + oxidized [NADPH--hemoprotein reductase] + H2O + H(+). It carries out the reaction all-trans-retinoate + reduced [NADPH--hemoprotein reductase] + O2 = all-trans-18-hydroxyretinoate + oxidized [NADPH--hemoprotein reductase] + H2O + H(+). In terms of biological role, a cytochrome P450 monooxygenase involved in the metabolism of retinoates (RAs), the active metabolites of vitamin A, and critical signaling molecules in animals. RAs exist as at least four different isomers: all-trans-RA (atRA), 9-cis-RA, 13-cis-RA, and 9,13-dicis-RA, where atRA is considered to be the biologically active isomer, although 9-cis-RA and 13-cis-RA also have activity. Catalyzes the hydroxylation of atRA primarily at C-4 and C-18, thereby contributing to the regulation of atRA homeostasis and signaling. Hydroxylation of atRA limits its biological activity and initiates a degradative process leading to its eventual elimination. Involved in the convertion of atRA to all-trans-4-oxo-RA. Able to metabolize other RAs such as 9-cis, 13-cis and 9,13-di-cis RA. Can oxidize all-trans-13,14-dihydroretinoate (DRA) to metabolites which could include all-trans-4-oxo-DRA, all-trans-4-hydroxy-DRA, all-trans-5,8-epoxy-DRA, and all-trans-18-hydroxy-DRA. May play a role in the oxidative metabolism of xenobiotics such as tazarotenic acid. This Gallus gallus (Chicken) protein is Cytochrome P450 26A1 (CYP26A1).